A 237-amino-acid polypeptide reads, in one-letter code: DNA repair protein RecO (237 aa).

It belongs to the RecO family.

Involved in DNA repair and RecF pathway recombination. The protein is DNA repair protein RecO of Rickettsia peacockii (strain Rustic).